We begin with the raw amino-acid sequence, 359 residues long: Phospho-N-acetylmuramoyl-pentapeptide-transferase (359 aa).

10 helical membrane passes run 3–23, 55–75, 80–100, 117–137, 156–176, 187–207, 231–251, 255–275, 280–300, and 334–354; these read QIMI…PALI, VAIL…GLAF, ITAS…VGFL, TAKT…VLQF, IATV…VVSA, LDGL…LITF, LALI…WNAA, IFMG…LSVT, ILAV…VLQI, and FWLL…GEWL.

It belongs to the glycosyltransferase 4 family. MraY subfamily. Requires Mg(2+) as cofactor.

It is found in the cell inner membrane. It catalyses the reaction UDP-N-acetyl-alpha-D-muramoyl-L-alanyl-gamma-D-glutamyl-meso-2,6-diaminopimeloyl-D-alanyl-D-alanine + di-trans,octa-cis-undecaprenyl phosphate = di-trans,octa-cis-undecaprenyl diphospho-N-acetyl-alpha-D-muramoyl-L-alanyl-D-glutamyl-meso-2,6-diaminopimeloyl-D-alanyl-D-alanine + UMP. Its pathway is cell wall biogenesis; peptidoglycan biosynthesis. Functionally, catalyzes the initial step of the lipid cycle reactions in the biosynthesis of the cell wall peptidoglycan: transfers peptidoglycan precursor phospho-MurNAc-pentapeptide from UDP-MurNAc-pentapeptide onto the lipid carrier undecaprenyl phosphate, yielding undecaprenyl-pyrophosphoryl-MurNAc-pentapeptide, known as lipid I. The polypeptide is Phospho-N-acetylmuramoyl-pentapeptide-transferase (Mycobacterium marinum (strain ATCC BAA-535 / M)).